Reading from the N-terminus, the 418-residue chain is MASEVAQIPAEETPAVAAAEKSEEPEKSAAPPADSAAAPAAAPAVEKAEDADGEKKDGEAGKQDKQQDGEEPKKDEAVAAPVATKSEAPPAQKFNVHKTNFEKDIIYLYQFSRTPLLPSLSPYCLKVETWLRLVGLKYENVDHKMRFRSKKGQLPFIELNGEEIADSAIIIKELSSKYEKYLDSGLTAEQRNVSYATIAMLENHLIWIIFYWRAKYPDNVLKGYKVNLQHALGLRLPNSILNFFFKITFGRKWFQGTKKLKAHGIGVHSAEEIEEFGKDDLKVLSEMLDCKPFFFGDEPTTLDVVAFAVLSQLHYLSKDIAYPLRDYMTEKCPNLIGHVSRMKDKCFPDWDEICTKLDLNAHIPKPEPETKEGKEGGEQEKSNEQEGTEGDKIEKELEKDKSNEKESTEENKEKEETK.

Disordered regions lie at residues 1 to 95 (MASE…QKFN) and 361 to 418 (AHIP…EETK). 2 stretches are compositionally biased toward low complexity: residues 9–19 (PAEETPAVAAA) and 28–45 (SAAP…APAV). Basic and acidic residues-rich tracts occupy residues 46–77 (EKAE…KDEA) and 364–418 (PKPE…EETK).

The protein belongs to the FAX family.

Together with Abl, involved in embryonic axonal development. The chain is Failed axon connections (fax) from Drosophila melanogaster (Fruit fly).